A 389-amino-acid polypeptide reads, in one-letter code: Protein P4 (389 aa).

This Rice tungro bacilliform virus (isolate Philippines) (RTBV) protein is Protein P4.